Reading from the N-terminus, the 236-residue chain is Sugar fermentation stimulation protein homolog (236 aa).

It belongs to the SfsA family.

The polypeptide is Sugar fermentation stimulation protein homolog (Synechococcus elongatus (strain ATCC 33912 / PCC 7942 / FACHB-805) (Anacystis nidulans R2)).